The primary structure comprises 357 residues: tRNA N6-adenosine threonylcarbamoyltransferase (357 aa).

Fe cation contacts are provided by His-116 and His-120. Substrate-binding positions include 139–143 (LVSGG), Asp-172, Gly-185, and Asn-284. Asp-312 is a binding site for Fe cation.

This sequence belongs to the KAE1 / TsaD family. Fe(2+) serves as cofactor.

The protein resides in the cytoplasm. It carries out the reaction L-threonylcarbamoyladenylate + adenosine(37) in tRNA = N(6)-L-threonylcarbamoyladenosine(37) in tRNA + AMP + H(+). Its function is as follows. Required for the formation of a threonylcarbamoyl group on adenosine at position 37 (t(6)A37) in tRNAs that read codons beginning with adenine. Is involved in the transfer of the threonylcarbamoyl moiety of threonylcarbamoyl-AMP (TC-AMP) to the N6 group of A37, together with TsaE and TsaB. TsaD likely plays a direct catalytic role in this reaction. This Synechococcus sp. (strain CC9902) protein is tRNA N6-adenosine threonylcarbamoyltransferase.